The chain runs to 100 residues: Omega toxin Ap2 (100 aa).

The signal sequence occupies residues 1-22; the sequence is MNTTQVILFAVVLVLTVTVGQA. Positions 23-57 are excised as a propeptide; that stretch reads DEDSAETSLLRKLEEAEASMFGQYLEESKNSPEQR. 3 cysteine pairs are disulfide-bonded: Cys-58–Cys-74, Cys-65–Cys-79, and Cys-73–Cys-94. A Serine amide modification is found at Ser-99.

It belongs to the neurotoxin 14 (magi-1) family. 08 (Ltx-4) subfamily. In terms of tissue distribution, expressed by the venom duct.

It is found in the secreted. Functionally, inhibits 31.17% of Cav2.1/CACNA1A current at 1 uM concentration. The polypeptide is Omega toxin Ap2 (Acanthoscurria paulensis (Brazilian giant black tarantula spider)).